Here is a 236-residue protein sequence, read N- to C-terminus: Probable sulfate/thiosulfate import ATP-binding protein CysA (236 aa).

In terms of domain architecture, ABC transporter spans 3 to 233 (ILIENISKRF…PTNTFVTNFL (231 aa)). 35-42 (GPSGSGKS) contributes to the ATP binding site.

The protein belongs to the ABC transporter superfamily. Sulfate/tungstate importer (TC 3.A.1.6) family.

The protein resides in the plastid. The protein localises to the chloroplast. It catalyses the reaction sulfate(out) + ATP + H2O = sulfate(in) + ADP + phosphate + H(+). The enzyme catalyses thiosulfate(out) + ATP + H2O = thiosulfate(in) + ADP + phosphate + H(+). Functionally, part of the ABC transporter complex involved in sulfate/thiosulfate import. Responsible for energy coupling to the transport system. This Chlorella vulgaris (Green alga) protein is Probable sulfate/thiosulfate import ATP-binding protein CysA.